A 125-amino-acid polypeptide reads, in one-letter code: Alpha-endosulfine (125 aa).

A compositionally biased stretch (basic and acidic residues) spans 1–37 (MSDKYIGDSHLEETGEEKQDSQEKEAVTPEKAEEQKL). A disordered region spans residues 1–53 (MSDKYIGDSHLEETGEEKQDSQEKEAVTPEKAEEQKLKAKYPNLGQKPGGSDF). The residue at position 28 (Thr28) is a Phosphothreonine; by CDK2. Ser67 is modified (phosphoserine; by GWL). The disordered stretch occupies residues 81-108 (QLPCAGPDKNLVTGDHIPTPQDLPQRKS). At Thr99 the chain carries Phosphothreonine; by CDK2. Residue Ser109 is modified to Phosphoserine; by PKA.

It belongs to the endosulfine family. Phosphorylation at Ser-67 by gwl during mitosis is essential for interaction with ppp2r2d (PR55-delta) and subsequent inactivation of PP2A.

The protein localises to the cytoplasm. Its function is as follows. Protein phosphatase inhibitor that specifically inhibits protein phosphatase 2A (PP2A) during mitosis. When phosphorylated at Ser-67 during mitosis, specifically interacts with ppp2r2d (PR55-delta) and inhibits its activity, leading to inactivation of PP2A, an essential condition to keep cyclin-B1-CDK1 activity high during M phase. The polypeptide is Alpha-endosulfine (ensa) (Xenopus tropicalis (Western clawed frog)).